Consider the following 696-residue polypeptide: Methionine--tRNA ligase (696 aa).

The short motif at 12–22 is the 'HIGH' region element; it reads PYANGPLHLGH. Positions 143, 146, 156, and 159 each coordinate Zn(2+). The 'KMSKS' region signature appears at 330-334; it reads KMSKS. K333 contributes to the ATP binding site. A tRNA-binding domain is found at 593–696; it reads DFAKLDLRIG…AGAQPGMPVR (104 aa).

Belongs to the class-I aminoacyl-tRNA synthetase family. MetG type 1 subfamily. As to quaternary structure, homodimer. Requires Zn(2+) as cofactor.

It is found in the cytoplasm. It carries out the reaction tRNA(Met) + L-methionine + ATP = L-methionyl-tRNA(Met) + AMP + diphosphate. Its function is as follows. Is required not only for elongation of protein synthesis but also for the initiation of all mRNA translation through initiator tRNA(fMet) aminoacylation. This is Methionine--tRNA ligase from Xanthomonas campestris pv. campestris (strain 8004).